A 180-amino-acid polypeptide reads, in one-letter code: Adenine phosphoribosyltransferase (180 aa).

Alanine 2 is modified (N-acetylalanine). Residues serine 15 and serine 30 each carry the phosphoserine modification. Tyrosine 60 bears the Phosphotyrosine mark. Serine 66 bears the Phosphoserine mark. Phosphothreonine is present on threonine 135.

It belongs to the purine/pyrimidine phosphoribosyltransferase family. As to quaternary structure, homodimer.

The protein resides in the cytoplasm. The enzyme catalyses AMP + diphosphate = 5-phospho-alpha-D-ribose 1-diphosphate + adenine. The protein operates within purine metabolism; AMP biosynthesis via salvage pathway; AMP from adenine: step 1/1. Functionally, catalyzes a salvage reaction resulting in the formation of AMP, that is energically less costly than de novo synthesis. This Bos taurus (Bovine) protein is Adenine phosphoribosyltransferase.